The primary structure comprises 115 residues: Large ribosomal subunit protein bL19 (115 aa).

It belongs to the bacterial ribosomal protein bL19 family.

Its function is as follows. This protein is located at the 30S-50S ribosomal subunit interface and may play a role in the structure and function of the aminoacyl-tRNA binding site. The sequence is that of Large ribosomal subunit protein bL19 from Lachnospira eligens (strain ATCC 27750 / DSM 3376 / VPI C15-48 / C15-B4) (Eubacterium eligens).